A 419-amino-acid chain; its full sequence is Putative competence-damage inducible protein (419 aa).

The protein belongs to the CinA family.

In Streptococcus agalactiae serotype III (strain NEM316), this protein is Putative competence-damage inducible protein.